Reading from the N-terminus, the 85-residue chain is U4-theraphotoxin-Hhn1a (85 aa).

The signal sequence occupies residues 1-22 (MKVTLIAILTCAAALVLHTTAA). A propeptide spanning residues 23 to 48 (EELEAESQLMEVGMPDTELAAVDEER) is cleaved from the precursor. Disulfide bonds link cysteine 52–cysteine 66, cysteine 56–cysteine 77, and cysteine 71–cysteine 82.

This sequence belongs to the neurotoxin 12 (Hwtx-2) family. 02 (Hwtx-2) subfamily. Monomer. As to expression, expressed by the venom gland.

The protein resides in the secreted. Functionally, neurotoxin active on both insects and mammals. The sequence is that of U4-theraphotoxin-Hhn1a from Cyriopagopus hainanus (Chinese bird spider).